Here is a 115-residue protein sequence, read N- to C-terminus: NAD(P)H-quinone oxidoreductase subunit M (115 aa).

Belongs to the complex I NdhM subunit family. As to quaternary structure, NDH-1 can be composed of about 15 different subunits; different subcomplexes with different compositions have been identified which probably have different functions.

The protein resides in the cellular thylakoid membrane. The catalysed reaction is a plastoquinone + NADH + (n+1) H(+)(in) = a plastoquinol + NAD(+) + n H(+)(out). The enzyme catalyses a plastoquinone + NADPH + (n+1) H(+)(in) = a plastoquinol + NADP(+) + n H(+)(out). Its function is as follows. NDH-1 shuttles electrons from an unknown electron donor, via FMN and iron-sulfur (Fe-S) centers, to quinones in the respiratory and/or the photosynthetic chain. The immediate electron acceptor for the enzyme in this species is believed to be plastoquinone. Couples the redox reaction to proton translocation, and thus conserves the redox energy in a proton gradient. Cyanobacterial NDH-1 also plays a role in inorganic carbon-concentration. This chain is NAD(P)H-quinone oxidoreductase subunit M, found in Synechococcus sp. (strain CC9605).